Here is a 472-residue protein sequence, read N- to C-terminus: SURF6 homolog gldi-11 (472 aa).

Disordered regions lie at residues 53–73, 89–232, 249–350, and 414–472; these read LSKKERKSMSAQQKQHLAKGL, KSKQ…SPEI, KVER…DRAL, and LVKK…GRIL. Low complexity predominate over residues 95–106; sequence KVQPQKVVAPVK. Positions 107–132 are enriched in basic and acidic residues; the sequence is RPADQNKNKEKVVKKDQKKQDKKADS. Over residues 133–150 the composition is skewed to acidic residues; it reads DSEEDDSSDDEEKEETDE. Positions 151–160 are enriched in basic and acidic residues; sequence PVAKKQKKEE. 2 stretches are compositionally biased toward acidic residues: residues 161–175 and 182–194; these read SSDDDEDSEDGEEPE and EAEDSDSTDEEEE. Residues 197-210 show a composition bias toward polar residues; that stretch reads SKPNKTVAQSTLKS. The span at 212 to 221 shows a compositional bias: basic and acidic residues; the sequence is GKIDKEIQKL. Over residues 274-285 the composition is skewed to basic residues; it reads LKRRESKLKLKQ. A compositionally biased stretch (basic and acidic residues) spans 286 to 305; that stretch reads RRAEEKKGKEAAAQVKKETV. The segment covering 414–426 has biased composition (basic residues); it reads LVKKNKMKDRRKQ. Residues 427–443 show a composition bias toward basic and acidic residues; the sequence is KWENRENKTEGEKQTKQ. The span at 459 to 472 shows a compositional bias: basic residues; it reads KRKMNKLRNKGRIL.

This sequence belongs to the SURF6 family.

It localises to the nucleus. Its subcellular location is the nucleoplasm. In terms of biological role, binds to both DNA and RNA in vitro, with a stronger binding capacity for RNA. May represent a nucleolar constitutive protein involved in ribosomal biosynthesis or assembly. The sequence is that of SURF6 homolog gldi-11 from Caenorhabditis elegans.